The following is a 1270-amino-acid chain: DNA-directed RNA polymerase subunit beta (1270 aa).

This sequence belongs to the RNA polymerase beta chain family. As to quaternary structure, the RNAP catalytic core consists of 2 alpha, 1 beta, 1 beta' and 1 omega subunit. When a sigma factor is associated with the core the holoenzyme is formed, which can initiate transcription.

The enzyme catalyses RNA(n) + a ribonucleoside 5'-triphosphate = RNA(n+1) + diphosphate. Its function is as follows. DNA-dependent RNA polymerase catalyzes the transcription of DNA into RNA using the four ribonucleoside triphosphates as substrates. The polypeptide is DNA-directed RNA polymerase subunit beta (Phocaeicola vulgatus (strain ATCC 8482 / DSM 1447 / JCM 5826 / CCUG 4940 / NBRC 14291 / NCTC 11154) (Bacteroides vulgatus)).